The chain runs to 451 residues: Probable D-serine dehydratase (451 aa).

Lys119 is modified (N6-(pyridoxal phosphate)lysine).

It belongs to the serine/threonine dehydratase family. DsdA subfamily. Requires pyridoxal 5'-phosphate as cofactor.

The enzyme catalyses D-serine = pyruvate + NH4(+). This chain is Probable D-serine dehydratase, found in Acidovorax sp. (strain JS42).